Consider the following 189-residue polypeptide: dTTP/UTP pyrophosphatase (189 aa).

D70 (proton acceptor) is an active-site residue.

The protein belongs to the Maf family. YhdE subfamily. Requires a divalent metal cation as cofactor.

Its subcellular location is the cytoplasm. It catalyses the reaction dTTP + H2O = dTMP + diphosphate + H(+). The catalysed reaction is UTP + H2O = UMP + diphosphate + H(+). Its function is as follows. Nucleoside triphosphate pyrophosphatase that hydrolyzes dTTP and UTP. May have a dual role in cell division arrest and in preventing the incorporation of modified nucleotides into cellular nucleic acids. The polypeptide is dTTP/UTP pyrophosphatase (Akkermansia muciniphila (strain ATCC BAA-835 / DSM 22959 / JCM 33894 / BCRC 81048 / CCUG 64013 / CIP 107961 / Muc)).